A 1485-amino-acid polypeptide reads, in one-letter code: Chromosome partition protein MukB (1485 aa).

Residue 34–41 coordinates ATP; it reads GGNGAGKS. Coiled-coil stretches lie at residues 337 to 480, 509 to 605, 780 to 805, 835 to 915, 977 to 1116, and 1210 to 1235; these read LNLV…QAYQ, QHLA…PVWL, RAAR…ATLS, EAEI…IQQH, GMLT…AKAG, and EAIE…KLAI. Residues 666–783 form a flexible hinge region; it reads PSGAEDARLI…EVPLFGRAAR (118 aa).

This sequence belongs to the SMC family. MukB subfamily. In terms of assembly, homodimerization via its hinge domain. Binds to DNA via its C-terminal region. Interacts, and probably forms a ternary complex, with MukE and MukF via its C-terminal region. The complex formation is stimulated by calcium or magnesium. Interacts with tubulin-related protein FtsZ.

Its subcellular location is the cytoplasm. It localises to the nucleoid. Plays a central role in chromosome condensation, segregation and cell cycle progression. Functions as a homodimer, which is essential for chromosome partition. Involved in negative DNA supercoiling in vivo, and by this means organize and compact chromosomes. May achieve or facilitate chromosome segregation by condensation DNA from both sides of a centrally located replisome during cell division. The polypeptide is Chromosome partition protein MukB (Yersinia pestis bv. Antiqua (strain Antiqua)).